We begin with the raw amino-acid sequence, 351 residues long: Sulfate/thiosulfate import ATP-binding protein CysA (351 aa).

The region spanning 3–237 (ITVRNLHKRF…PRSAFVYEFL (235 aa)) is the ABC transporter domain. Residue 35–42 (GPSGCGKT) coordinates ATP.

It belongs to the ABC transporter superfamily. Sulfate/tungstate importer (TC 3.A.1.6) family. As to quaternary structure, the complex is composed of two ATP-binding proteins (CysA), two transmembrane proteins (CysT and CysW) and a solute-binding protein (CysP).

It localises to the cell inner membrane. It carries out the reaction sulfate(out) + ATP + H2O = sulfate(in) + ADP + phosphate + H(+). The enzyme catalyses thiosulfate(out) + ATP + H2O = thiosulfate(in) + ADP + phosphate + H(+). Functionally, part of the ABC transporter complex CysAWTP involved in sulfate/thiosulfate import. Responsible for energy coupling to the transport system. The polypeptide is Sulfate/thiosulfate import ATP-binding protein CysA (Burkholderia pseudomallei (strain K96243)).